The primary structure comprises 150 residues: Large ribosomal subunit protein bL9 (150 aa).

This sequence belongs to the bacterial ribosomal protein bL9 family.

In terms of biological role, binds to the 23S rRNA. This chain is Large ribosomal subunit protein bL9, found in Neisseria meningitidis serogroup C (strain 053442).